A 1908-amino-acid polypeptide reads, in one-letter code: Putative ankyrin repeat protein L484 (1908 aa).

ANK repeat units follow at residues 20–50 (DIME…KFNI), 60–97 (PNKT…PMDL), 101–130 (DNVW…SIDR), 134–167 (SNNT…DIDK), and 1370–1399 (DGNT…NPFT). Positions 1539-1603 (VQLLNPKLRD…QTNISDLEFK (65 aa)) form a coiled coil.

The protein localises to the virion. In Acanthamoeba polyphaga mimivirus (APMV), this protein is Putative ankyrin repeat protein L484.